Here is a 284-residue protein sequence, read N- to C-terminus: Heat stress transcription factor B-1 (284 aa).

Residues 12-106 (PAPFLSKTYQ…LLTDIRRRKS (95 aa)) mediate DNA binding. Residues 118–151 (VGSPSESNSGGGDDHGSSSTSSPGSSKNPGSVEN) are disordered. A compositionally biased stretch (low complexity) spans 134 to 148 (SSSTSSPGSSKNPGS). Positions 147-192 (GSVENMVADLSGENEKLKRENNNLSSELAAAKKQRDELVTFLTGHL) are hydrophobic repeat HR-A/B. The Nuclear localization signal motif lies at 247 to 252 (RKKRDR).

Belongs to the HSF family. Class B subfamily. Homotrimer. Exhibits temperature-dependent phosphorylation.

Its subcellular location is the nucleus. Functionally, transcriptional regulator that specifically binds DNA sequence 5'-AGAAnnTTCT-3' known as heat shock promoter elements (HSE). This chain is Heat stress transcription factor B-1 (HSFB1), found in Arabidopsis thaliana (Mouse-ear cress).